The sequence spans 250 residues: Glutathione transferase omega-1 (250 aa).

The 81-residue stretch at 21–101 (SKGSFRVYNM…YLDDAFPETR (81 aa)) folds into the GST N-terminal domain. The active-site Nucleophile is Cys33. Glutathione contacts are provided by residues Lys60 and 85-86 (ES). The GST C-terminal domain occupies 106–234 (DPYEKVQQKL…TQSLEHGAAF (129 aa)).

This sequence belongs to the GST superfamily. Omega family. As to quaternary structure, homodimer. Expressed in the intestinal cells.

The protein localises to the cytoplasm. The catalysed reaction is RX + glutathione = an S-substituted glutathione + a halide anion + H(+). It catalyses the reaction L-dehydroascorbate + 2 glutathione = glutathione disulfide + L-ascorbate. The enzyme catalyses methylarsonate + 2 glutathione + H(+) = methylarsonous acid + glutathione disulfide + H2O. Exhibits glutathione-dependent thiol transferase activity. Has dehydroascorbate reductase activity and may contribute to the recycling of ascorbic acid. Participates in the biotransformation of inorganic arsenic and reduces monomethylarsonic acid (MMA). Protects against environmental stress and oxidative stress. The sequence is that of Glutathione transferase omega-1 (gsto-1) from Caenorhabditis elegans.